A 171-amino-acid polypeptide reads, in one-letter code: AAF/I fimbrial subunit (171 aa).

The N-terminal stretch at M1–A28 is a signal peptide.

It localises to the fimbrium. The sequence is that of AAF/I fimbrial subunit (aggA) from Escherichia coli.